Reading from the N-terminus, the 527-residue chain is Putative ABC transporter peptide-binding protein BOV_A0352 (527 aa).

The N-terminal stretch at 1-23 is a signal peptide; that stretch reads MRLRNFYSALALSAAVFAGPLYA.

Belongs to the bacterial solute-binding protein 5 family. The complex is composed of two ATP-binding proteins (BOV_A0347 and BOV_A0348), two transmembrane proteins (BOV_A0350 and BOV_A0351) and a solute-binding protein (BOV_A0352).

Its subcellular location is the periplasm. Its function is as follows. Probably part of an ABC transporter complex that could be involved in peptide import. This chain is Putative ABC transporter peptide-binding protein BOV_A0352, found in Brucella ovis (strain ATCC 25840 / 63/290 / NCTC 10512).